Reading from the N-terminus, the 390-residue chain is (S)-8-oxocitronellyl enol synthase CYC2 (390 aa).

NADP(+)-binding positions include 35-37, 63-64, 81-82, 105-106, and Gln143; these read TGI, RR, DI, and TW. Residues Lys147 and Tyr179 contribute to the active site. Lys147 and Tyr179 together coordinate substrate. NADP(+)-binding positions include Tyr179 and 213 to 215; that span reads SMM.

Belongs to the short-chain dehydrogenases/reductases (SDR) family. Highly divergent.

The enzyme catalyses (S)-8-oxocitronellyl enol + NADP(+) = (6E)-8-oxogeranial + NADPH + H(+). It carries out the reaction (S)-8-oxocitronellyl enol + NAD(+) = (6E)-8-oxogeranial + NADH + H(+). Functionally, iridoid synthase that catalyzes the first step in generation of the iridoid ring scaffold using the linear monoterpene (6E)-8-oxogeranial as substrate. Iridoids comprise a large family of distinctive bicyclic monoterpenes that possess a wide range of pharmacological activities, including anticancer, anti-inflammatory, antifungal and antibacterial activities. This Camptotheca acuminata (Happy tree) protein is (S)-8-oxocitronellyl enol synthase CYC2.